We begin with the raw amino-acid sequence, 239 residues long: Tetratricopeptide repeat protein 9B (239 aa).

The tract at residues 1-54 (MQRGALSPVLMLSAAPEPPPRPPPALSPPGPGSAPRHGSARSGPAPEPSGGLAA) is disordered. Residues Ser-7 and Ser-27 each carry the phosphoserine modification. The span at 16-32 (PEPPPRPPPALSPPGPG) shows a compositional bias: pro residues. One copy of the TPR 1 repeat lies at 63-97 (AVAFKAEGQRCYREKKFREAIGKYHRALLQLKAAQ). Residues 98–121 (GARPGGLPTPSPGPTTSPGPARLS) are disordered. Pro residues predominate over residues 104–114 (LPTPSPGPTTS). The TPR 2 repeat unit spans residues 169–202 (FKATYRAGIAFYHLGDYARALRYLQEARSREPTD).

It belongs to the TTC9 family.

The chain is Tetratricopeptide repeat protein 9B (Ttc9b) from Mus musculus (Mouse).